Reading from the N-terminus, the 1183-residue chain is Translation initiation factor IF-2 (1183 aa).

Disordered stretches follow at residues 65-512 (SSKN…KVHI) and 540-579 (LARP…AMEL). The span at 83–99 (TQKDQKTEPKKKNHDQT) shows a compositional bias: basic and acidic residues. A compositionally biased stretch (polar residues) spans 100–130 (ELSQAKLNTLLKPSQTLIKSQGSSQANNQKA). Basic and acidic residues predominate over residues 220–229 (PKIDIQDKKP). The segment covering 231–270 (QPNNQKAKTRINQGEISPQKVGQGNIQKIKSQNKQNAPSR) has biased composition (polar residues). A compositionally biased stretch (basic and acidic residues) spans 288–304 (IRKEKPVNKPHTNEVRN). Polar residues-rich tracts occupy residues 321–336 (ANRQ…NNRI) and 357–367 (NRTTQGQNRPG). The span at 485–499 (GRPDWDDSAKLDALR) shows a compositional bias: basic and acidic residues. 2 stretches are compositionally biased toward basic residues: residues 544–553 (SKPKVGKRNN) and 560–574 (LKKR…RQRR). A tr-type G domain is found at 675–847 (RRPPVVTVMG…VLLVTEVEDL (173 aa)). Residues 684 to 691 (GHVDHGKT) form a G1 region. 684 to 691 (GHVDHGKT) contributes to the GTP binding site. The segment at 709-713 (GITQH) is G2. Residues 734 to 737 (DTPG) form a G3 region. GTP contacts are provided by residues 734–738 (DTPGH) and 788–791 (NKID). A G4 region spans residues 788–791 (NKID). Positions 824–826 (SAI) are G5.

It belongs to the TRAFAC class translation factor GTPase superfamily. Classic translation factor GTPase family. IF-2 subfamily.

The protein resides in the cytoplasm. Its function is as follows. One of the essential components for the initiation of protein synthesis. Protects formylmethionyl-tRNA from spontaneous hydrolysis and promotes its binding to the 30S ribosomal subunits. Also involved in the hydrolysis of GTP during the formation of the 70S ribosomal complex. The sequence is that of Translation initiation factor IF-2 from Prochlorococcus marinus (strain NATL2A).